We begin with the raw amino-acid sequence, 335 residues long: Methionine import ATP-binding protein MetN 1 (335 aa).

In terms of domain architecture, ABC transporter spans 2–242 (IEFQNVHKTY…PKHPTTRRFV (241 aa)). 38-45 (GHSGAGKS) provides a ligand contact to ATP.

Belongs to the ABC transporter superfamily. Methionine importer (TC 3.A.1.24) family. As to quaternary structure, the complex is composed of two ATP-binding proteins (MetN), two transmembrane proteins (MetI) and a solute-binding protein (MetQ).

It is found in the cell inner membrane. It carries out the reaction L-methionine(out) + ATP + H2O = L-methionine(in) + ADP + phosphate + H(+). It catalyses the reaction D-methionine(out) + ATP + H2O = D-methionine(in) + ADP + phosphate + H(+). In terms of biological role, part of the ABC transporter complex MetNIQ involved in methionine import. Responsible for energy coupling to the transport system. This Pseudomonas fluorescens (strain ATCC BAA-477 / NRRL B-23932 / Pf-5) protein is Methionine import ATP-binding protein MetN 1.